We begin with the raw amino-acid sequence, 28 residues long: Small spore coat assembly protein A (28 aa).

The helical transmembrane segment at 8 to 28 (GFALLVVLFILLIIVGAAYIY) threads the bilayer.

Belongs to the SscA family.

The protein localises to the spore coat. It localises to the membrane. In terms of biological role, spore protein involved in the assembly of several components of the spore coat, including CotB, CotG and CotH, and in spore germination. This chain is Small spore coat assembly protein A, found in Bacillus subtilis (strain 168).